Reading from the N-terminus, the 159-residue chain is MTLHPDLALPSPEDFEQLSPEALAARMNGPEGQGLPGTLGARLGIRYVSMARERVVATMPVEGNRQPAGRLHGGATLALAEELASVGSWLNLDPQRQVAVGVDLNGTHVRGVSEGHVTAEARLSYRGRSLMVWEIEMKDEKGRTTSLCRCTCNVISMGA.

It belongs to the thioesterase PaaI family.

The protein is Putative esterase DR_2406 of Deinococcus radiodurans (strain ATCC 13939 / DSM 20539 / JCM 16871 / CCUG 27074 / LMG 4051 / NBRC 15346 / NCIMB 9279 / VKM B-1422 / R1).